The chain runs to 640 residues: MTYSLLPHIHSPQDLHALSLDKLPVLCDEIRNKIIESLSLTGGHLASNLGGVELTVALHYVFSSPDDQFIFDVGHQSYVHKLLTGRNTEAFSNIRHDNGLSGFTTPQESNHDIFFSGHAGNALSLALGLAKGSSNSSSHILPILGDAAFSCGLTLEALNNIPADLSKFIIVLNDNQMSISENVGNIPQGISQWIYPQKISKLSQKIHSWIQNLPSFLHKKKTLSHKVDIALKSLSHPLFEQFGLHYVGPIDGHNVKKLVQALQMIKDQPQPILFHVCTVKGNGLTEAERDPIRYHGVKAHFQNTSLKKTSGNVELQTPISFPQHAGNILCRLGKKYPQLQVVTPAMSLGSCLEDFRKQFPDRFTDVGIAEGHAVTFSAGIARSGTPVCCSIYSTFLHRAMDNVFHDVCMQELPVIFAIDRAGLAFHDGRSHHGIYDLGFLCSMPNMVICQPRNALVLERLFFSSLLWKSPCAIRYPNIPANEKASNSSFPFSPILPGEAEILCQGDDLLLIALGHMCNTALTVKEHLLDYGISTTVVDPIFIKPLDRKLLQSLLTHHSKVIILEEHSIHGGLGSEFLLFLNQHNIKADVLSLGVPDMFIPHGNPETILNLIGLTSDHITQRILSHFKFSTPIPIERFFKA.

Thiamine diphosphate contacts are provided by residues histidine 75 and 117–119; that span reads GHA. Aspartate 146 serves as a coordination point for Mg(2+). Residues 147 to 148, asparagine 175, and glutamate 370 each bind thiamine diphosphate; that span reads AA. Mg(2+) is bound at residue asparagine 175.

This sequence belongs to the transketolase family. DXPS subfamily. In terms of assembly, homodimer. It depends on Mg(2+) as a cofactor. The cofactor is thiamine diphosphate.

It carries out the reaction D-glyceraldehyde 3-phosphate + pyruvate + H(+) = 1-deoxy-D-xylulose 5-phosphate + CO2. It functions in the pathway metabolic intermediate biosynthesis; 1-deoxy-D-xylulose 5-phosphate biosynthesis; 1-deoxy-D-xylulose 5-phosphate from D-glyceraldehyde 3-phosphate and pyruvate: step 1/1. Functionally, catalyzes the acyloin condensation reaction between C atoms 2 and 3 of pyruvate and glyceraldehyde 3-phosphate to yield 1-deoxy-D-xylulose-5-phosphate (DXP). The polypeptide is 1-deoxy-D-xylulose-5-phosphate synthase (Chlamydia trachomatis serovar L2 (strain ATCC VR-902B / DSM 19102 / 434/Bu)).